A 548-amino-acid chain; its full sequence is Tryprostatin B 6-hydroxylase (548 aa).

A run of 3 helical transmembrane segments spans residues 5–25 (MKCG…LWYF), 35–54 (WRYV…LLYA), and 73–93 (LLMV…RTLF). Residue Cys491 coordinates heme.

This sequence belongs to the cytochrome P450 family. It depends on heme as a cofactor.

The protein resides in the membrane. It carries out the reaction tryprostatin B + reduced [NADPH--hemoprotein reductase] + O2 = 6-hydroxytryprostatin B + oxidized [NADPH--hemoprotein reductase] + H2O + H(+). The protein operates within mycotoxin biosynthesis. Its function is as follows. Cytochrome P450 monooxygenase; part of the gene cluster that mediates the biosynthesis of fumitremorgins, indole alkaloids that carry not only intriguing chemical structures, but also interesting biological and pharmacological activities. The biosynthesis of fumitremorgin-type alkaloids begins by condensation of the two amino acids L-tryptophan and L-proline to brevianamide F, catalyzed by the non-ribosomal peptide synthetase ftmPS/ftmA. Brevianamide F is then prenylated by the prenyltransferase ftmPT1/ftmB in the presence of dimethylallyl diphosphate, resulting in the formation of tryprostatin B. The three cytochrome P450 monooxygenases, ftmP450-1/ftmC, ftmP450-2/ftmE and ftmP450-3/FtmG, are responsible for the conversion of tryprostatin B to 6-hydroxytryprostatin B, tryprostatin A to fumitremorgin C and fumitremorgin C to 12,13-dihydroxyfumitremorgin C, respectively. The putative methyltransferase ftmMT/ftmD is expected for the conversion of 6-hydroxytryprostatin B to tryprostatin A. FtmPT2/FtmH catalyzes the prenylation of 12,13-dihydroxyfumitre-morgin C in the presence of dimethylallyl diphosphate, resulting in the formation of fumitremorgin B. Fumitremorgin B is further converted to verruculogen by ftmOx1/ftmF via the insertion of an endoperoxide bond between the two prenyl moieties. Finally, verruculogen is further converted to fumitremorgin A by the verruculogen prenyltransferase ftmPT3. This is Tryprostatin B 6-hydroxylase from Neosartorya fischeri (strain ATCC 1020 / DSM 3700 / CBS 544.65 / FGSC A1164 / JCM 1740 / NRRL 181 / WB 181) (Aspergillus fischerianus).